Consider the following 55-residue polypeptide: Large ribosomal subunit protein bL33 (55 aa).

This sequence belongs to the bacterial ribosomal protein bL33 family.

This is Large ribosomal subunit protein bL33 from Beijerinckia indica subsp. indica (strain ATCC 9039 / DSM 1715 / NCIMB 8712).